Reading from the N-terminus, the 357-residue chain is MPLSRLIIQQFRNIKACDIDLSAGFNFLIGPNGSGKTSVLEAIYLLGHGRSFKSSLTGRVIQNECDELFVHGRFLNSDQFELPIGINKQRDGSTEVKIGGQSGQKLAQLAQVLPLQLIHPEGFDLLTDGPKHRRAFIDWGVFHTEPAFYDAWGRFKRLNKQRNALLKTARSYRELSYWDQEMAHLAENISQWRALYIEQMKTVAETICQTFLPEFEIQLKYYRGWDKDTPYHEILEKNFERDQSLGYTFSGPNKADLRIKVNGTPVEDVLSRGQLKLMVCALRVAQGQHLTEMTGKQCIYLIDDFASELDSQRRKRLADCLKETGAQVFVSSITESQIADMLDDTGKLFHVEHGRIE.

30–37 lines the ATP pocket; sequence GPNGSGKT.

This sequence belongs to the RecF family.

Its subcellular location is the cytoplasm. Functionally, the RecF protein is involved in DNA metabolism; it is required for DNA replication and normal SOS inducibility. RecF binds preferentially to single-stranded, linear DNA. It also seems to bind ATP. This chain is DNA replication and repair protein RecF, found in Vibrio campbellii (strain ATCC BAA-1116).